The primary structure comprises 441 residues: Histidinol dehydrogenase (441 aa).

Positions 136, 197, and 220 each coordinate NAD(+). Substrate contacts are provided by Ser-243, Gln-265, and His-268. Positions 265 and 268 each coordinate Zn(2+). Residues Glu-333 and His-334 each act as proton acceptor in the active site. 4 residues coordinate substrate: His-334, Asp-367, Glu-421, and His-426. Asp-367 lines the Zn(2+) pocket. His-426 contacts Zn(2+).

It belongs to the histidinol dehydrogenase family. It depends on Zn(2+) as a cofactor.

The catalysed reaction is L-histidinol + 2 NAD(+) + H2O = L-histidine + 2 NADH + 3 H(+). The protein operates within amino-acid biosynthesis; L-histidine biosynthesis; L-histidine from 5-phospho-alpha-D-ribose 1-diphosphate: step 9/9. Its function is as follows. Catalyzes the sequential NAD-dependent oxidations of L-histidinol to L-histidinaldehyde and then to L-histidine. The chain is Histidinol dehydrogenase from Pseudomonas putida (strain ATCC 47054 / DSM 6125 / CFBP 8728 / NCIMB 11950 / KT2440).